The following is a 142-amino-acid chain: uncharacterized protein (142 aa).

Residues 19 to 54 (IHTTPHPHTPHHTHHTHTTPTPTPHPHTHTPTPERS) are disordered. The segment covering 26-35 (HTPHHTHHTH) has biased composition (basic residues).

This is an uncharacterized protein from Saccharomyces cerevisiae (strain ATCC 204508 / S288c) (Baker's yeast).